A 176-amino-acid chain; its full sequence is Probable DNA-directed RNA polymerase subunit delta (176 aa).

The region spanning 14-81 (KSFIDMAYTL…GENLWGLRDW (68 aa)) is the HTH HARE-type domain. The disordered stretch occupies residues 114 to 176 (LGEDEMDDDD…DFEDEEDFKA (63 aa)). Composition is skewed to acidic residues over residues 116 to 145 (EDEMDDDDDIPAQTDDQEELNDPEDEQVEE) and 153 to 176 (VIEEDEDELDEDEEDFEDEEDFKA).

The protein belongs to the RpoE family. RNAP is composed of a core of 2 alpha, a beta and a beta' subunits. The core is associated with a delta subunit and one of several sigma factors.

Functionally, participates in both the initiation and recycling phases of transcription. In the presence of the delta subunit, RNAP displays an increased specificity of transcription, a decreased affinity for nucleic acids, and an increased efficiency of RNA synthesis because of enhanced recycling. The protein is Probable DNA-directed RNA polymerase subunit delta of Staphylococcus aureus (strain bovine RF122 / ET3-1).